The sequence spans 127 residues: Putative defensin-like protein 180 (127 aa).

The N-terminal stretch at Met-1–Ala-26 is a signal peptide. 8 disulfide bridges follow: Cys-29-Cys-70, Cys-36-Cys-55, Cys-39-Cys-64, Cys-43-Cys-66, Cys-81-Cys-127, Cys-92-Cys-112, Cys-97-Cys-121, and Cys-101-Cys-123.

The protein belongs to the DEFL family.

Its subcellular location is the secreted. The sequence is that of Putative defensin-like protein 180 (LCR58) from Arabidopsis thaliana (Mouse-ear cress).